Here is a 505-residue protein sequence, read N- to C-terminus: Lysine--tRNA ligase (505 aa).

Mg(2+)-binding residues include Glu-415 and Glu-422.

This sequence belongs to the class-II aminoacyl-tRNA synthetase family. Homodimer. Mg(2+) is required as a cofactor.

It is found in the cytoplasm. It catalyses the reaction tRNA(Lys) + L-lysine + ATP = L-lysyl-tRNA(Lys) + AMP + diphosphate. In Pectobacterium carotovorum subsp. carotovorum (strain PC1), this protein is Lysine--tRNA ligase.